The primary structure comprises 315 residues: tRNA uridine(34) hydroxylase (315 aa).

Residues 122–223 (SDPDVLVIDT…YLEQIPQPES (102 aa)) form the Rhodanese domain. The active-site Cysteine persulfide intermediate is the cysteine 183.

This sequence belongs to the TrhO family.

The catalysed reaction is uridine(34) in tRNA + AH2 + O2 = 5-hydroxyuridine(34) in tRNA + A + H2O. Functionally, catalyzes oxygen-dependent 5-hydroxyuridine (ho5U) modification at position 34 in tRNAs. The chain is tRNA uridine(34) hydroxylase from Caulobacter vibrioides (strain ATCC 19089 / CIP 103742 / CB 15) (Caulobacter crescentus).